A 219-amino-acid polypeptide reads, in one-letter code: Formate dehydrogenase 2 subunit beta (cytochrome c-553) (219 aa).

In terms of domain architecture, 4Fe-4S ferredoxin-type 1 spans 3 to 32 (KAFLIDTTRCTACRGCQLACKEWHDLPANV). Residues Cys-12, Cys-15, Cys-18, Cys-22, Cys-74, Cys-77, Cys-82, Cys-124, Cys-141, Cys-144, Cys-156, and Cys-160 each contribute to the [4Fe-4S] cluster site. One can recognise a 4Fe-4S ferredoxin-type 2 domain in the interval 132 to 171 (DPKTKRITKCDMCFDRVSAGMQPICVKTCPTGTMAFGERD).

In terms of assembly, heterotrimer of cytochrome c3 FDH2C and formate dehydrogenase FDH2 alpha and beta subunits that forms the FdhABC(3) complex. It depends on [4Fe-4S] cluster as a cofactor.

It localises to the periplasm. Beta chain of the formate dehydrogenase (FDH) that catalyzes the reversible two-electron oxidation of formate to carbon dioxide. The beta chain is an electron transfer unit. The chain is Formate dehydrogenase 2 subunit beta (cytochrome c-553) from Nitratidesulfovibrio vulgaris (strain ATCC 29579 / DSM 644 / CCUG 34227 / NCIMB 8303 / VKM B-1760 / Hildenborough) (Desulfovibrio vulgaris).